The primary structure comprises 859 residues: Rod cGMP-specific 3',5'-cyclic phosphodiesterase subunit alpha (859 aa).

Gly2 is subject to N-acetylglycine. GAF domains lie at 73–222 (QAEK…NLIM) and 254–431 (DIER…GWSV). The PDEase domain maps to 483-816 (EEEELAEILQ…KEWKALADEY (334 aa)). The active-site Proton donor is the His559. Residues His563, His599, Asp600, and Asp720 each coordinate a divalent metal cation. Positions 821–859 (KGLEEEKQKQQAANQAAAGSQHGGKQPGGGPASKSCCVQ) are disordered. The span at 830 to 840 (QQAANQAAAGS) shows a compositional bias: low complexity. The span at 841 to 851 (QHGGKQPGGGP) shows a compositional bias: gly residues. Cys856 is modified (cysteine methyl ester). Residue Cys856 is the site of S-farnesyl cysteine attachment. The propeptide at 857 to 859 (CVQ) is removed in mature form.

This sequence belongs to the cyclic nucleotide phosphodiesterase family. In terms of assembly, oligomer composed of two catalytic chains (alpha and beta), an inhibitory chain (gamma) and the delta chain. It depends on a divalent metal cation as a cofactor.

It is found in the cell membrane. The protein localises to the cell projection. Its subcellular location is the cilium. It localises to the photoreceptor outer segment. The enzyme catalyses 3',5'-cyclic GMP + H2O = GMP + H(+). In terms of biological role, rod-specific cGMP phosphodiesterase that catalyzes the hydrolysis of 3',5'-cyclic GMP. This protein participates in processes of transmission and amplification of the visual signal. The protein is Rod cGMP-specific 3',5'-cyclic phosphodiesterase subunit alpha of Bos taurus (Bovine).